Here is an 804-residue protein sequence, read N- to C-terminus: Tubulin polyglutamylase TTLL13 (804 aa).

Residues 1–41 (MEPNNCKTSESEEDDIEEEESEEECVREESTTPNSTQQALR) are disordered. A coiled-coil region spans residues 4–30 (NNCKTSESEEDDIEEEESEEECVREES). A compositionally biased stretch (acidic residues) spans 11-26 (SEEDDIEEEESEEECV). Residues 85 to 430 (RRPLAINLTN…RGCDKKKVIE (346 aa)) form the TTL domain. Residues lysine 202, 208–209 (QG), 230–233 (QQYI), and 243–245 (KFD) contribute to the ATP site. A protein is bound at residue glutamine 208. L-glutamate is bound at residue arginine 269. 291-292 (TN) provides a ligand contact to ATP. Residues tyrosine 293 and lysine 311 each coordinate L-glutamate. Positions 376, 389, and 391 each coordinate Mg(2+). Position 392 (histidine 392) interacts with a protein. Residues 401–482 (RLDREVKDAL…LGGYRRIYPG (82 aa)) form a c-MTBD region region. Residue lysine 407 coordinates L-glutamate. Coiled coils occupy residues 504 to 541 (ASKAREECARQQLEEIRLKQEQQENPGTKKRKENKEQN) and 585 to 609 (QDIVEEEELERMKLLLQRENLIRSL). Residues 519 to 556 (IRLKQEQQENPGTKKRKENKEQNQGESAGEKSRSRTAT) form a disordered region. Basic and acidic residues predominate over residues 536-551 (ENKEQNQGESAGEKSR).

It belongs to the tubulin--tyrosine ligase family. Mg(2+) serves as cofactor. As to expression, highly expressed in heart and testis. Expressed in brain, kidney, liver, lung, muscle and trachea. In the brain, expressed in ependymal cilia, cortex, corpus callosum and striatum.

It carries out the reaction (L-glutamyl)(n)-gamma-L-glutamyl-L-glutamyl-[protein] + L-glutamate + ATP = (L-glutamyl)(n+1)-gamma-L-glutamyl-L-glutamyl-[protein] + ADP + phosphate + H(+). Functionally, polyglutamylase which modifies tubulin, generating polyglutamate side chains of variable lengths on the gamma-carboxyl group of specific glutamate residues within the C-terminal tail of tubulin. Mediates ATP-dependent polyglutamate side-chain elongation of the polyglutamylation reaction but not the initiation step. Preferentially modifies the alpha-tubulin tail over a beta-tail. This is Tubulin polyglutamylase TTLL13 from Mus musculus (Mouse).